A 298-amino-acid polypeptide reads, in one-letter code: Putative GATA zinc finger domain-containing protein 25 (298 aa).

A coiled-coil region spans residues 4-37 (DNKNKNDNYQESIQRIVNQRNNLLKEIENKINQQ). Residues 148 to 227 (QQQLQQSHTK…RGRPSKPKPE (80 aa)) form a disordered region. A compositionally biased stretch (acidic residues) spans 183-202 (EENEENEENEENEENEENEE). The segment covering 203 to 212 (NKEKDVEVAK) has biased composition (basic and acidic residues). The segment covering 214–223 (NKPKRGRPSK) has biased composition (basic residues). A GATA-type; degenerate zinc finger spans residues 229 to 256 (CFRYGTRSCPYWRKNVIKGELVDVCNAC).

The polypeptide is Putative GATA zinc finger domain-containing protein 25 (gtaY) (Dictyostelium discoideum (Social amoeba)).